A 148-amino-acid polypeptide reads, in one-letter code: Protein-arginine-phosphatase (148 aa).

The active-site Nucleophile is C9. Residue 10–15 coordinates substrate; sequence TGNTCR. R15 is a catalytic residue. D117 functions as the Proton donor in the catalytic mechanism.

This sequence belongs to the low molecular weight phosphotyrosine protein phosphatase family. As to quaternary structure, is present in solution as a mixture of monomers, dimers and higher order oligomers (trimers and tetramers).

The enzyme catalyses N(omega)-phospho-L-arginyl-[protein] + H2O = L-arginyl-[protein] + phosphate. Irreversibly inhibited by the synthetic inhibitor cyc-SeCN-amidine, which inactivates the enzyme by inducing disulfide bond formation between the two active site cysteine residues Cys-9 and Cys-14. Catalyzes the specific dephosphorylation of phosphoarginine residues in proteins. Probably counteracts the protein arginine kinase McsB in vivo. Exhibits almost no activity against pTyr peptides. Protein arginine phosphorylation has a physiologically important role and is involved in the regulation of many critical cellular processes, such as protein homeostasis, motility, competence, and stringent and stress responses, by regulating gene expression and protein activity. In Geobacillus stearothermophilus (Bacillus stearothermophilus), this protein is Protein-arginine-phosphatase (ywle).